The following is a 91-amino-acid chain: Anther-specific protein RTS (91 aa).

Positions Met1–Ala21 are cleaved as a signal peptide.

Required for tapetum and pollen development. This chain is Anther-specific protein RTS, found in Oryza sativa subsp. japonica (Rice).